A 495-amino-acid polypeptide reads, in one-letter code: Probable serine/threonine-protein kinase DDB_G0292354 (495 aa).

The Protein kinase domain maps to 16–275 (WTVVKKIGQG…PNYVFLQTLL (260 aa)). Residues 22–30 (IGQGAFGEI) and Lys-45 each bind ATP. Asp-136 (proton acceptor) is an active-site residue. Positions 293-469 (EVQTNSGASS…NGNGSNSQPI (177 aa)) are disordered. Composition is skewed to low complexity over residues 295–333 (QTNS…NSSA) and 354–364 (NNSNNNNNNNN). Residues 385 to 395 (ESNSQIANSSE) are compositionally biased toward polar residues. The span at 435–466 (SNNNNINNNNNNYNNNNNNNNNSHMNGNGSNS) shows a compositional bias: low complexity.

It belongs to the protein kinase superfamily. CK1 Ser/Thr protein kinase family.

This is Probable serine/threonine-protein kinase DDB_G0292354 from Dictyostelium discoideum (Social amoeba).